Reading from the N-terminus, the 191-residue chain is MKLIVGLGNPGREYAATRHNAGAWWVVRLADQLGVTLKADGKFHGLCARIGQGESESWLLNPQTYMNASGRAVAALCRFYRIQPEQMLVVHDELDLPPGVSRLKLDGGLGGHNGLKDIVAHLGTREFWRLRIGIGHPGEKHAVVNYVLQPPRKEEAALIDTAINDSLEVWPLIAEGNYQAAMMRLHTQKQS.

Tyr-14 provides a ligand contact to tRNA. The Proton acceptor role is filled by His-19. TRNA is bound by residues Tyr-65, Asn-67, and Asn-113.

The protein belongs to the PTH family. As to quaternary structure, monomer.

The protein resides in the cytoplasm. The catalysed reaction is an N-acyl-L-alpha-aminoacyl-tRNA + H2O = an N-acyl-L-amino acid + a tRNA + H(+). Its function is as follows. Hydrolyzes ribosome-free peptidyl-tRNAs (with 1 or more amino acids incorporated), which drop off the ribosome during protein synthesis, or as a result of ribosome stalling. In terms of biological role, catalyzes the release of premature peptidyl moieties from peptidyl-tRNA molecules trapped in stalled 50S ribosomal subunits, and thus maintains levels of free tRNAs and 50S ribosomes. In Nitrosospira multiformis (strain ATCC 25196 / NCIMB 11849 / C 71), this protein is Peptidyl-tRNA hydrolase.